The primary structure comprises 345 residues: S-adenosylmethionine:tRNA ribosyltransferase-isomerase (345 aa).

The protein belongs to the QueA family. As to quaternary structure, monomer.

Its subcellular location is the cytoplasm. It carries out the reaction 7-aminomethyl-7-carbaguanosine(34) in tRNA + S-adenosyl-L-methionine = epoxyqueuosine(34) in tRNA + adenine + L-methionine + 2 H(+). It functions in the pathway tRNA modification; tRNA-queuosine biosynthesis. Transfers and isomerizes the ribose moiety from AdoMet to the 7-aminomethyl group of 7-deazaguanine (preQ1-tRNA) to give epoxyqueuosine (oQ-tRNA). The sequence is that of S-adenosylmethionine:tRNA ribosyltransferase-isomerase from Shewanella halifaxensis (strain HAW-EB4).